Reading from the N-terminus, the 192-residue chain is GTP cyclohydrolase-2 (192 aa).

Residue 47 to 51 coordinates GTP; it reads RIHSE. Zn(2+) contacts are provided by Cys-52, Cys-63, and Cys-65. GTP is bound by residues Gln-68, 90 to 92, and Thr-112; that span reads EGR. The active-site Proton acceptor is the Asp-124. Residue Arg-126 is the Nucleophile of the active site. Positions 147 and 152 each coordinate GTP.

It belongs to the GTP cyclohydrolase II family. Zn(2+) is required as a cofactor.

It carries out the reaction GTP + 4 H2O = 2,5-diamino-6-hydroxy-4-(5-phosphoribosylamino)-pyrimidine + formate + 2 phosphate + 3 H(+). Its pathway is cofactor biosynthesis; riboflavin biosynthesis; 5-amino-6-(D-ribitylamino)uracil from GTP: step 1/4. In terms of biological role, catalyzes the conversion of GTP to 2,5-diamino-6-ribosylamino-4(3H)-pyrimidinone 5'-phosphate (DARP), formate and pyrophosphate. This is GTP cyclohydrolase-2 from Picrophilus torridus (strain ATCC 700027 / DSM 9790 / JCM 10055 / NBRC 100828 / KAW 2/3).